Consider the following 1258-residue polypeptide: Non-secreted LysM effector LysM19 (1258 aa).

The tract at residues 148 to 168 is disordered; it reads VTQSLPNISSHEKRDDHEGNS. Residues 157-168 are compositionally biased toward basic and acidic residues; it reads SHEKRDDHEGNS. 2 LysM domains span residues 1028–1073 and 1179–1227; these read IVYT…SICL and RWHV…AYCT.

It belongs to the secreted LysM effector family.

In terms of biological role, non-secreted LysM effector that might be involved in manipulation of host defenses for successful infection. This chain is Non-secreted LysM effector LysM19, found in Penicillium expansum (Blue mold rot fungus).